A 465-amino-acid polypeptide reads, in one-letter code: Argininosuccinate lyase (465 aa).

Belongs to the lyase 1 family. Argininosuccinate lyase subfamily.

The protein localises to the cytoplasm. It catalyses the reaction 2-(N(omega)-L-arginino)succinate = fumarate + L-arginine. Its pathway is amino-acid biosynthesis; L-arginine biosynthesis; L-arginine from L-ornithine and carbamoyl phosphate: step 3/3. In Hyphomonas neptunium (strain ATCC 15444), this protein is Argininosuccinate lyase.